Consider the following 388-residue polypeptide: Putative nickel insertion protein (388 aa).

This sequence belongs to the LarC family.

This is Putative nickel insertion protein from Geobacter sulfurreducens (strain ATCC 51573 / DSM 12127 / PCA).